Here is a 233-residue protein sequence, read N- to C-terminus: Uracil-DNA glycosylase (233 aa).

The Proton acceptor role is filled by aspartate 70.

Belongs to the uracil-DNA glycosylase (UDG) superfamily. UNG family.

The protein localises to the cytoplasm. It catalyses the reaction Hydrolyzes single-stranded DNA or mismatched double-stranded DNA and polynucleotides, releasing free uracil.. Functionally, excises uracil residues from the DNA which can arise as a result of misincorporation of dUMP residues by DNA polymerase or due to deamination of cytosine. This chain is Uracil-DNA glycosylase, found in Helicobacter pylori (strain P12).